The primary structure comprises 297 residues: Ubiquinone biosynthesis protein COQ4, mitochondrial (297 aa).

Residues 1 to 54 (MLSSARARLPISLCSFSLPFARLPNTLSRYQETWQRLPGRTHPTRSIRTTPAYE) constitute a mitochondrion transit peptide. Zn(2+) is bound by residues His178, Asp179, His182, and Glu194.

It belongs to the COQ4 family. In terms of assembly, component of a multi-subunit COQ enzyme complex, composed of at least COQ3, COQ4, COQ5, COQ6, COQ7 and COQ9. The cofactor is Zn(2+).

The protein resides in the mitochondrion inner membrane. The catalysed reaction is a 4-hydroxy-3-methoxy-5-(all-trans-polyprenyl)benzoate + H(+) = a 2-methoxy-6-(all-trans-polyprenyl)phenol + CO2. It participates in cofactor biosynthesis; ubiquinone biosynthesis. Functionally, lyase that catalyzes the C1-decarboxylation of 4-hydroxy-3-methoxy-5-(all-trans-polyprenyl)benzoic acid into 2-methoxy-6-(all-trans-polyprenyl)phenol during ubiquinone biosynthesis. This is Ubiquinone biosynthesis protein COQ4, mitochondrial from Laccaria bicolor (strain S238N-H82 / ATCC MYA-4686) (Bicoloured deceiver).